The chain runs to 205 residues: Thymidylate kinase (205 aa).

9-16 (GPEGSGKT) lines the ATP pocket.

It belongs to the thymidylate kinase family.

The catalysed reaction is dTMP + ATP = dTDP + ADP. In terms of biological role, phosphorylation of dTMP to form dTDP in both de novo and salvage pathways of dTTP synthesis. In Staphylococcus aureus (strain MSSA476), this protein is Thymidylate kinase.